We begin with the raw amino-acid sequence, 643 residues long: Alpha-dioxygenase PIOX (643 aa).

The active-site Proton acceptor is His168. Asp169 contributes to the Ca(2+) binding site. His173 is a binding site for heme b. 4 residues coordinate Ca(2+): Thr221, Trp223, Asp225, and Ser227. Positions 393, 490, and 494 each coordinate heme b.

The protein belongs to the peroxidase family. Heme b serves as cofactor. The cofactor is Ca(2+).

The enzyme catalyses hexadecanoate + O2 = (2R)-2-hydroperoxyhexadecanoate. It catalyses the reaction dodecanoate + O2 = (2R)-2-hydroperoxydodecanoate. In terms of biological role, alpha-dioxygenase that catalyzes the primary oxygenation step of a variety of 14-20 carbon fatty acids, containing up to three unsaturated bonds, into their corresponding 2R-hydroperoxides. Involved in the production of oxylipins that function in cell signaling, wound healing, and protection from infection. The alpha-oxidation pathway of fatty acids may play a role during plant developmental processes. This chain is Alpha-dioxygenase PIOX, found in Pisum sativum (Garden pea).